The primary structure comprises 155 residues: Cytochrome c-type biogenesis protein CcmE (155 aa).

Residues 1-7 (MTRKQKR) lie on the Cytoplasmic side of the membrane. Residues 8–28 (LVVIAGGMSFILAAVLLVMFA) traverse the membrane as a helical; Signal-anchor for type II membrane protein segment. Residues 29-155 (FSQSVAYFYM…GKGQEAKATP (127 aa)) lie on the Periplasmic side of the membrane. Positions 124 and 128 each coordinate heme.

The protein belongs to the CcmE/CycJ family.

It is found in the cell inner membrane. Heme chaperone required for the biogenesis of c-type cytochromes. Transiently binds heme delivered by CcmC and transfers the heme to apo-cytochromes in a process facilitated by CcmF and CcmH. This chain is Cytochrome c-type biogenesis protein CcmE, found in Rhizobium etli (strain ATCC 51251 / DSM 11541 / JCM 21823 / NBRC 15573 / CFN 42).